The primary structure comprises 276 residues: Diaminopimelate epimerase (276 aa).

Substrate-binding residues include N13, Q46, and N66. The Proton donor role is filled by C75. Residues 76-77, N159, N192, and 210-211 contribute to the substrate site; these read GN and ER. C219 (proton acceptor) is an active-site residue. 220–221 contacts substrate; sequence GT.

This sequence belongs to the diaminopimelate epimerase family. Homodimer.

The protein localises to the cytoplasm. The catalysed reaction is (2S,6S)-2,6-diaminopimelate = meso-2,6-diaminopimelate. It participates in amino-acid biosynthesis; L-lysine biosynthesis via DAP pathway; DL-2,6-diaminopimelate from LL-2,6-diaminopimelate: step 1/1. Its function is as follows. Catalyzes the stereoinversion of LL-2,6-diaminopimelate (L,L-DAP) to meso-diaminopimelate (meso-DAP), a precursor of L-lysine and an essential component of the bacterial peptidoglycan. The chain is Diaminopimelate epimerase from Pseudomonas fluorescens.